The primary structure comprises 270 residues: Phosphatidylglycerol--prolipoprotein diacylglyceryl transferase (270 aa).

7 helical membrane-spanning segments follow: residues 10-30 (VALA…LIGI), 56-76 (LIFW…VLFY), 92-112 (WKGG…AWWF), 120-140 (FFQL…AGRI), 174-194 (PSQL…LYIF), 202-222 (MAVS…VEFV), and 236-256 (WVTM…GLLW). Residue R139 coordinates a 1,2-diacyl-sn-glycero-3-phospho-(1'-sn-glycerol).

This sequence belongs to the Lgt family.

It localises to the cell inner membrane. The catalysed reaction is L-cysteinyl-[prolipoprotein] + a 1,2-diacyl-sn-glycero-3-phospho-(1'-sn-glycerol) = an S-1,2-diacyl-sn-glyceryl-L-cysteinyl-[prolipoprotein] + sn-glycerol 1-phosphate + H(+). The protein operates within protein modification; lipoprotein biosynthesis (diacylglyceryl transfer). Its function is as follows. Catalyzes the transfer of the diacylglyceryl group from phosphatidylglycerol to the sulfhydryl group of the N-terminal cysteine of a prolipoprotein, the first step in the formation of mature lipoproteins. This Pseudomonas fluorescens (strain SBW25) protein is Phosphatidylglycerol--prolipoprotein diacylglyceryl transferase.